A 249-amino-acid polypeptide reads, in one-letter code: Tetraspanin-7 (249 aa).

At 1–16 (MASRRMETKPVITCLK) the chain is on the cytoplasmic side. Residues 17–40 (TLLIIYSFVFWITGVILLAVGVWG) form a helical membrane-spanning segment. Topologically, residues 41-56 (KLTLGTYISLIAENST) are extracellular. N-linked (GlcNAc...) asparagine glycosylation occurs at Asn54. Residues 57 to 75 (NAPYVLIGTGTTIVVFGLF) traverse the membrane as a helical segment. Topologically, residues 76-86 (GCFATCRGSPW) are cytoplasmic. Residues 87–112 (MLKLYAMFLSLVFLAELVAGISGFVF) traverse the membrane as a helical segment. Topologically, residues 113-213 (RHEIKDTFLR…LVTSFMETNM (101 aa)) are extracellular. N-linked (GlcNAc...) asparagine glycosylation is found at Asn155, Asn158, Asn177, and Asn188. A helical membrane pass occupies residues 214-234 (GIIAGVAFGIAFSQLIGMLLA). The Cytoplasmic portion of the chain corresponds to 235 to 249 (CCLSRFITANQYEMV).

This sequence belongs to the tetraspanin (TM4SF) family.

Its subcellular location is the membrane. In terms of biological role, may be involved in cell proliferation and cell motility. This is Tetraspanin-7 (Tspan7) from Mus musculus (Mouse).